We begin with the raw amino-acid sequence, 101 residues long: NADH-quinone oxidoreductase subunit K (101 aa).

3 helical membrane-spanning segments follow: residues 4–24, 30–50, and 62–82; these read LGHM…GIFL, IVLL…FVAF, and FVFF…AILV.

The protein belongs to the complex I subunit 4L family. NDH-1 is composed of 14 different subunits. Subunits NuoA, H, J, K, L, M, N constitute the membrane sector of the complex.

Its subcellular location is the cell inner membrane. It carries out the reaction a quinone + NADH + 5 H(+)(in) = a quinol + NAD(+) + 4 H(+)(out). In terms of biological role, NDH-1 shuttles electrons from NADH, via FMN and iron-sulfur (Fe-S) centers, to quinones in the respiratory chain. The immediate electron acceptor for the enzyme in this species is believed to be ubiquinone. Couples the redox reaction to proton translocation (for every two electrons transferred, four hydrogen ions are translocated across the cytoplasmic membrane), and thus conserves the redox energy in a proton gradient. In Stenotrophomonas maltophilia (strain R551-3), this protein is NADH-quinone oxidoreductase subunit K.